The chain runs to 199 residues: Imidazoleglycerol-phosphate dehydratase (199 aa).

It belongs to the imidazoleglycerol-phosphate dehydratase family.

The protein resides in the cytoplasm. It catalyses the reaction D-erythro-1-(imidazol-4-yl)glycerol 3-phosphate = 3-(imidazol-4-yl)-2-oxopropyl phosphate + H2O. It participates in amino-acid biosynthesis; L-histidine biosynthesis; L-histidine from 5-phospho-alpha-D-ribose 1-diphosphate: step 6/9. This Roseiflexus sp. (strain RS-1) protein is Imidazoleglycerol-phosphate dehydratase.